A 523-amino-acid polypeptide reads, in one-letter code: Flavonoid 3',5'-hydroxylase (523 aa).

A heme-binding site is contributed by Cys460.

This sequence belongs to the cytochrome P450 family. The cofactor is heme.

It catalyses the reaction a 3',5'-unsubstituted flavanone + 2 reduced [NADPH--hemoprotein reductase] + 2 O2 = a 3',5'-dihydroxyflavanone + 2 oxidized [NADPH--hemoprotein reductase] + 2 H2O + 2 H(+). The protein operates within pigment biosynthesis; anthocyanin biosynthesis. Catalyzes the 3'5'-hydroxylation of naringenin and eriodictyol to form 5,7,3,'4',5'-pentahydroxyflavanone and 3',5'-hydroxylation of dihydrokaempferol and dihydroquercetin to form dihydromyricetin. The chain is Flavonoid 3',5'-hydroxylase (CYP75A6) from Campanula medium (Canterbury bells).